The primary structure comprises 206 residues: Outer-membrane lipoprotein carrier protein (206 aa).

A signal peptide spans 1–21 (MKKLLCAVLLSPLLYSNAVLA).

This sequence belongs to the LolA family. In terms of assembly, monomer.

The protein resides in the periplasm. Participates in the translocation of lipoproteins from the inner membrane to the outer membrane. Only forms a complex with a lipoprotein if the residue after the N-terminal Cys is not an aspartate (The Asp acts as a targeting signal to indicate that the lipoprotein should stay in the inner membrane). In Shewanella sp. (strain ANA-3), this protein is Outer-membrane lipoprotein carrier protein.